The primary structure comprises 165 residues: Large ribosomal subunit protein uL10 (165 aa).

This sequence belongs to the universal ribosomal protein uL10 family. As to quaternary structure, part of the ribosomal stalk of the 50S ribosomal subunit. The N-terminus interacts with L11 and the large rRNA to form the base of the stalk. The C-terminus forms an elongated spine to which L12 dimers bind in a sequential fashion forming a multimeric L10(L12)X complex.

Its function is as follows. Forms part of the ribosomal stalk, playing a central role in the interaction of the ribosome with GTP-bound translation factors. In Borrelia turicatae (strain 91E135), this protein is Large ribosomal subunit protein uL10.